The primary structure comprises 203 residues: MAAAKDSHEDHDTSTENADESNHDPQFEPIVSLPEQEIKTLEEDEEELFKMRAKLFRFASENDLPEWKERGTGDVKLLKHKEKGTIRLLMRRDKTLKICANHYITPMMELKPNAGSDRAWVWNTHADFADECPKPELLAIRFLNAENAQKFKTKFEECRKEIEEREKKGPGKNDNAEKVAEKLEALSVREAREEAEEKSEEKQ.

Basic and acidic residues predominate over residues 1-26 (MAAAKDSHEDHDTSTENADESNHDPQ). Residues 1–33 (MAAAKDSHEDHDTSTENADESNHDPQFEPIVSL) are disordered. The residue at position 2 (alanine 2) is an N-acetylalanine. The residue at position 13 (threonine 13) is a Phosphothreonine. Phosphoserine is present on residues serine 21 and serine 60. The 139-residue stretch at 26–164 (QFEPIVSLPE…FEECRKEIEE (139 aa)) folds into the RanBD1 domain. Lysine 150 bears the N6-acetyllysine; alternate mark. Lysine 150 is subject to N6-succinyllysine; alternate. Over residues 163 to 192 (EEREKKGPGKNDNAEKVAEKLEALSVREAR) the composition is skewed to basic and acidic residues. Residues 163–203 (EEREKKGPGKNDNAEKVAEKLEALSVREAREEAEEKSEEKQ) are disordered. An N6-acetyllysine modification is found at lysine 182. Serine 187 carries the phosphoserine modification. The span at 193 to 203 (EEAEEKSEEKQ) shows a compositional bias: acidic residues.

The protein belongs to the RANBP1 family. In terms of assembly, interacts with RAN (via C-terminus of GTP-bound form) but not with GDP-bound RAN. Identified in a complex composed of RAN, RANGAP1 and RANBP1. Identified in a complex that contains TNPO1, RAN and RANBP1. Identified in a complex that contains CSE1L, KPNA2, RAN and RANBP1. Identified in a complex with nucleotide-free RAN and RCC1.

Plays a role in RAN-dependent nucleocytoplasmic transport. Alleviates the TNPO1-dependent inhibition of RAN GTPase activity and mediates the dissociation of RAN from proteins involved in transport into the nucleus. Induces a conformation change in the complex formed by XPO1 and RAN that triggers the release of the nuclear export signal of cargo proteins. Promotes the disassembly of the complex formed by RAN and importin beta. Promotes dissociation of RAN from a complex with KPNA2 and CSE1L. Required for normal mitotic spindle assembly and normal progress through mitosis via its effect on RAN. Does not increase the RAN GTPase activity by itself, but increases GTP hydrolysis mediated by RANGAP1. Inhibits RCC1-dependent exchange of RAN-bound GDP by GTP. In Mus musculus (Mouse), this protein is Ran-specific GTPase-activating protein (Ranbp1).